We begin with the raw amino-acid sequence, 644 residues long: uncharacterized protein (644 aa).

The tract at residues 1–39 is disordered; sequence MKANGLDNDPARTRMERTDIDSEHPEAQPLLNNNHRTLG. The Cytoplasmic segment spans residues 1-90; it reads MKANGLDNDP…ILNILILINT (90 aa). A compositionally biased stretch (basic and acidic residues) spans 9–26; the sequence is DPARTRMERTDIDSEHPE. 3 positions are modified to phosphoserine: Ser-22, Ser-56, and Ser-63. Residues 91 to 111 traverse the membrane as a helical segment; it reads IWLVTTLISDFFFNINILFGF. The Vacuolar segment spans residues 112–122; it reads SNRYASFNDLT. A helical transmembrane segment spans residues 123 to 143; that stretch reads LIFISIIANSFNLWFNKLGLY. At 144–147 the chain is on the cytoplasmic side; it reads SALD. A helical membrane pass occupies residues 148-168; the sequence is YSLNVTLCVLTLFNLALTYLI. Residues 169–174 lie on the Vacuolar side of the membrane; that stretch reads KYTRQR. Residues 175 to 195 traverse the membrane as a helical segment; the sequence is IGFVGTFTYLWTSFSFFIGAI. Residues 196–271 lie on the Cytoplasmic side of the membrane; that stretch reads LDWYLLFYNN…EWVSIGFRNT (76 aa). A disordered region spans residues 225–251; the sequence is NENHTNSTENRDRSQYGSGSPTPTHRS. Polar residues predominate over residues 239–251; the sequence is QYGSGSPTPTHRS. At Ser-244 the chain carries Phosphoserine. A helical membrane pass occupies residues 272-292; the sequence is IKFLILIFFALFTLNTLLTTL. Topologically, residues 293–644 are vacuolar; that stretch reads DTYRLTHKLP…IGELGKLTED (352 aa). The AB hydrolase-1 domain occupies 348–619; that stretch reads PIILFEHGGY…IVEGGHEIYK (272 aa). Positions 469 to 492 are disordered; that stretch reads GRGDGDDGDDGNGNDGDGRNHDKT.

It is found in the vacuole membrane. This is an uncharacterized protein from Saccharomyces cerevisiae (strain YJM789) (Baker's yeast).